Consider the following 381-residue polypeptide: Creatine kinase B-type (381 aa).

Ser-4 bears the Phosphoserine mark. Residues 11–98 (KLRFPAEDEF…FDPIIEDRHG (88 aa)) form the Phosphagen kinase N-terminal domain. Thr-35 is subject to Phosphothreonine. A Glycyl lysine isopeptide (Lys-Gly) (interchain with G-Cter in ubiquitin) cross-link involves residue Lys-45. Creatine is bound at residue Val-72. The span at 96 to 110 (RHGGYKPSDEHKTDL) shows a compositional bias: basic and acidic residues. Residues 96–123 (RHGGYKPSDEHKTDLNPDNLQGGDDLDP) form a disordered region. Residues Lys-101 and Lys-107 each participate in a glycyl lysine isopeptide (Lys-Gly) (interchain with G-Cter in ubiquitin) cross-link. The residue at position 125 (Tyr-125) is a Phosphotyrosine. A Phosphagen kinase C-terminal domain is found at 125–367 (YVLSSRVRTG…KLLIEMEQRL (243 aa)). Residues 128–132 (SSRVR), Arg-130, Arg-132, and His-191 contribute to the ATP site. The interval 130 to 138 (RVRTGRSIR) is internal MTS-like signal. Phosphoserine is present on Ser-199. Glu-232 contacts creatine. Residue Arg-236 participates in ATP binding. Position 269 is a 3'-nitrotyrosine (Tyr-269). Ser-285 serves as a coordination point for creatine. An ATP-binding site is contributed by Arg-292. Ser-309 bears the Phosphoserine mark. Residues Arg-320, 320 to 325 (RGTGGV), and Asp-335 each bind ATP. Thr-322 is subject to Phosphothreonine. Residue Lys-381 forms a Glycyl lysine isopeptide (Lys-Gly) (interchain with G-Cter in ubiquitin) linkage.

Belongs to the ATP:guanido phosphotransferase family. As to quaternary structure, dimer of identical or non-identical chains, which can be either B (brain type) or M (muscle type). With MM being the major form in skeletal muscle and myocardium, MB existing in myocardium, and BB existing in many tissues, especially brain. Interacts with SLC12A6 (via C-terminus); the interaction may be required for SLC12A6 potassium-chloride cotransport activity. Post-translationally, ubiquitinated by the ECS(ASB9) complex, leading to its degradation by the proteasome.

Its subcellular location is the cytoplasm. The protein resides in the cytosol. The protein localises to the mitochondrion. It localises to the cell membrane. The catalysed reaction is creatine + ATP = N-phosphocreatine + ADP + H(+). In terms of biological role, reversibly catalyzes the transfer of phosphate between ATP and various phosphogens (e.g. creatine phosphate). Creatine kinase isoenzymes play a central role in energy transduction in tissues with large, fluctuating energy demands, such as skeletal muscle, heart, brain and spermatozoa. Acts as a key regulator of adaptive thermogenesis as part of the futile creatine cycle: localizes to the mitochondria of thermogenic fat cells and acts by mediating phosphorylation of creatine to initiate a futile cycle of creatine phosphorylation and dephosphorylation. During the futile creatine cycle, creatine and N-phosphocreatine are in a futile cycle, which dissipates the high energy charge of N-phosphocreatine as heat without performing any mechanical or chemical work. The protein is Creatine kinase B-type (CKB) of Oryctolagus cuniculus (Rabbit).